Consider the following 60-residue polypeptide: Small, acid-soluble spore protein 1 (60 aa).

The protein belongs to the alpha/beta-type SASP family. SASP are degraded in the first minutes of spore germination and provide amino acids for both new protein synthesis and metabolism.

SASP are bound to spore DNA. They are double-stranded DNA-binding proteins that cause DNA to change to an a-like conformation. They protect the DNA backbone from chemical and enzymatic cleavage and are thus involved in dormant spore's high resistance to UV light. The sequence is that of Small, acid-soluble spore protein 1 (ssp1) from Clostridium perfringens (strain 13 / Type A).